Reading from the N-terminus, the 336-residue chain is tRNA N6-adenosine threonylcarbamoyltransferase (336 aa).

Residues His-115 and His-119 each coordinate Fe cation. Substrate-binding positions include 137–141 (LVSGG), Asp-170, Gly-183, Asp-187, and Asn-276. Asp-302 contacts Fe cation.

It belongs to the KAE1 / TsaD family. The cofactor is Fe(2+).

Its subcellular location is the cytoplasm. It carries out the reaction L-threonylcarbamoyladenylate + adenosine(37) in tRNA = N(6)-L-threonylcarbamoyladenosine(37) in tRNA + AMP + H(+). Its function is as follows. Required for the formation of a threonylcarbamoyl group on adenosine at position 37 (t(6)A37) in tRNAs that read codons beginning with adenine. Is involved in the transfer of the threonylcarbamoyl moiety of threonylcarbamoyl-AMP (TC-AMP) to the N6 group of A37, together with TsaE and TsaB. TsaD likely plays a direct catalytic role in this reaction. The chain is tRNA N6-adenosine threonylcarbamoyltransferase from Streptococcus suis (strain 98HAH33).